Here is a 454-residue protein sequence, read N- to C-terminus: Replicative DNA helicase DnaB (454 aa).

Positions 1–149 are N-terminal domain (NTD); it reads MSELFSERIP…LDEADRKIME (149 aa). The tract at residues 163 to 176 is linker helix; that stretch reads KDILVQTYDNIEML. The SF4 helicase domain maps to 179–445; that stretch reads RDGEITGIPT…NKFVNLERRF (267 aa). The interval 183 to 454 is C-terminal domain (CTD); it reads ITGIPTGFTE…FDEAQIPPGA (272 aa). Residues Ser-213, Gly-215, Lys-216, Thr-217, and Ala-218 each contribute to the ATP site. The active-site Nucleophile is Glu-241. Positions 250 and 362 each coordinate ATP. Positions 381, 382, and 384 each coordinate ssDNA. Residues Lys-418, Gln-419, and Arg-420 each contribute to the ATP site.

Belongs to the helicase family. DnaB subfamily. As to quaternary structure, homohexamer. Interacts with DnaG primase, as DnaB(6):DnaG(3). Interacts with the N-terminus of DnaI (shown with DnaI of B.subtilis), forms a helicase DnaB(6):DnaI(6) complex. The DnaB-DnaI complex is disrupted by DnaD (DnaD and DnaI from B.subtilis). A stable complex DnaI(6):DnaB(6):DnaG(3) fragment can be isolated; DnaI and DnaG do not contact each other (DnaI in this complex is derived from B.subtilis). Forms a complex with DNA clamp loader protein tau (shown with B.subtilis HolA) tau(3):DnaB(6); a single ATP hydrolysis even is sufficient for complex formation.

It catalyses the reaction Couples ATP hydrolysis with the unwinding of duplex DNA at the replication fork by translocating in the 5'-3' direction. This creates two antiparallel DNA single strands (ssDNA). The leading ssDNA polymer is the template for DNA polymerase III holoenzyme which synthesizes a continuous strand.. The catalysed reaction is ATP + H2O = ADP + phosphate + H(+). The main replicative DNA helicase, it participates in initiation and elongation during chromosome replication. Travels ahead of the DNA replisome, separating double-stranded (ds)DNA into templates for DNA synthesis. Binding of single-stranded (ss)DNA to the hexamer suggests a 2-nucleotide step size for the helicase and a hand-over-hand mechanism of DNA unwinding. Has ssDNA-stimulated ATPase activity. DnaG primase stimulates the helicase activity (the helicase direction was not determine but is probably 5'-3'). Loaded onto DNA by helicase loader DnaI (shown with DnaI of B.subtilis); ATP-binding enhances loading and subsequent ATP hydrolysis dissociates the complex, leaving helicase on the DNA. Binds ssDNA and less well dsDNA, in the presence of ADPNP (probably 5'-adenylyl beta, gamma-imidodiphosphate, but not ATP) binding to both DNAs is improved. The protein is Replicative DNA helicase DnaB of Geobacillus stearothermophilus (Bacillus stearothermophilus).